Reading from the N-terminus, the 266-residue chain is Mediator of RNA polymerase II transcription subunit 18 (266 aa).

The protein belongs to the Mediator complex subunit 18 family. As to quaternary structure, component of the Mediator complex.

The protein localises to the nucleus. Its function is as follows. Component of the Mediator complex, a coactivator involved in the regulated transcription of nearly all RNA polymerase II-dependent genes. Mediator functions as a bridge to convey information from gene-specific regulatory proteins to the basal RNA polymerase II transcription machinery. Mediator is recruited to promoters by direct interactions with regulatory proteins and serves as a scaffold for the assembly of a functional preinitiation complex with RNA polymerase II and the general transcription factors. The polypeptide is Mediator of RNA polymerase II transcription subunit 18 (SRB5) (Candida glabrata (strain ATCC 2001 / BCRC 20586 / JCM 3761 / NBRC 0622 / NRRL Y-65 / CBS 138) (Yeast)).